The chain runs to 341 residues: Heme A synthase (341 aa).

5 helical membrane-spanning segments follow: residues 11–31 (AVST…IIGG), 101–121 (LIGL…HLSA), 127–147 (LFGL…MVAS), 160–180 (LATH…FSLE), and 194–214 (AGVT…GAFV). A heme-binding site is contributed by histidine 259. 3 helical membrane-spanning segments follow: residues 261-278 (WTGY…WQVW), 288-308 (FMVI…AALL), and 315-335 (LSLA…AAAW). Residue histidine 319 participates in heme binding.

Belongs to the COX15/CtaA family. Type 2 subfamily. Interacts with CtaB. The cofactor is heme b.

It is found in the cell membrane. The enzyme catalyses Fe(II)-heme o + 2 A + H2O = Fe(II)-heme a + 2 AH2. Its pathway is porphyrin-containing compound metabolism; heme A biosynthesis; heme A from heme O: step 1/1. Functionally, catalyzes the conversion of heme O to heme A by two successive hydroxylations of the methyl group at C8. The first hydroxylation forms heme I, the second hydroxylation results in an unstable dihydroxymethyl group, which spontaneously dehydrates, resulting in the formyl group of heme A. The chain is Heme A synthase from Maricaulis maris (strain MCS10) (Caulobacter maris).